Here is a 318-residue protein sequence, read N- to C-terminus: Ribonuclease Z (318 aa).

7 residues coordinate Zn(2+): His62, His64, Asp66, His67, His144, Asp215, and His273. Asp66 functions as the Proton acceptor in the catalytic mechanism.

The protein belongs to the RNase Z family. In terms of assembly, homodimer. The cofactor is Zn(2+).

The catalysed reaction is Endonucleolytic cleavage of RNA, removing extra 3' nucleotides from tRNA precursor, generating 3' termini of tRNAs. A 3'-hydroxy group is left at the tRNA terminus and a 5'-phosphoryl group is left at the trailer molecule.. Zinc phosphodiesterase, which displays some tRNA 3'-processing endonuclease activity. Probably involved in tRNA maturation, by removing a 3'-trailer from precursor tRNA. This Prochlorococcus marinus (strain MIT 9313) protein is Ribonuclease Z.